The sequence spans 710 residues: Early transcription factor 82 kDa subunit (710 aa).

It belongs to the poxviridae VETF large subunit family. As to quaternary structure, heterodimer of a 70 kDa and a 82 kDa subunit. Part of the early transcription complex composed of ETF, RAP94/OPG109, and the DNA-directed RNA polymerase.

The protein resides in the virion. In terms of biological role, acts with RNA polymerase to initiate transcription from early gene promoters. Is recruited by the RPO-associated protein of 94 kDa RAP94/OPG109 to form the early transcription complex, which also contains the core RNA polymerase. ETF heterodimer binds to early gene promoters. This is Early transcription factor 82 kDa subunit (OPG133) from Homo sapiens (Human).